The sequence spans 175 residues: Peptide deformylase (175 aa).

The Fe cation site is built by Cys-96 and His-138. The active site involves Glu-139. Fe cation is bound at residue His-142.

This sequence belongs to the polypeptide deformylase family. It depends on Fe(2+) as a cofactor.

The enzyme catalyses N-terminal N-formyl-L-methionyl-[peptide] + H2O = N-terminal L-methionyl-[peptide] + formate. Removes the formyl group from the N-terminal Met of newly synthesized proteins. Requires at least a dipeptide for an efficient rate of reaction. N-terminal L-methionine is a prerequisite for activity but the enzyme has broad specificity at other positions. This is Peptide deformylase from Campylobacter jejuni subsp. jejuni serotype O:2 (strain ATCC 700819 / NCTC 11168).